A 56-amino-acid chain; its full sequence is Ovomucoid (56 aa).

A Kazal-like domain is found at 6-56 (VDCSEYPKPACTMEQRPLCGSDNKTYGNKCNFCNAVVESNGTLTLSHFGKC). Disulfide bonds link Cys8/Cys38, Cys16/Cys35, and Cys24/Cys56. Asn45 is a glycosylation site (N-linked (GlcNAc...) asparagine).

The protein resides in the secreted. This Afropavo congensis (Congo peafowl) protein is Ovomucoid.